A 1149-amino-acid polypeptide reads, in one-letter code: Polyprotein nsP1234 (1149 aa).

In terms of domain architecture, Macro spans 1–160 (APSYRVRRTD…KIQEAIDRRT (160 aa)). The ADP-D-ribose site is built by Asp-10, Asn-24, Gly-32, Gly-112, Val-113, and Phe-114. Zn(2+) contacts are provided by Cys-262, Cys-264, Cys-287, and Cys-305. A Phosphothreonine; by host modification is found at Thr-344. 2 consecutive short sequence motifs (FGDF; binding to host G3BP1) follow at residues 512-515 (FGDF) and 523-526 (FGDI). In terms of domain architecture, RdRp catalytic spans 903–1018 (DAVLETDIAS…HGVRSDPLMA (116 aa)).

As to quaternary structure, interacts with mRNA-capping enzyme nsP1. Interacts with host DDX1. RNA-directed Interacts with host DDX3. Interacts (via C-terminus) with host G3BP1; this interaction inhibits the formation of host stress granules on viral mRNAs and the nsp3-G3BP1 complexes bind viral RNAs and probably orchestrate the assembly of viral replication complexes. Interacts (via C-terminus) with host G3BP2; this interaction inhibits the formation of host stress granules on viral mRNAs and the nsp3-G3BP2 complexes bind viral RNAs and probably orchestrate the assembly of viral replication complexes. Interacts with itself. Interacts with mRNA-capping enzyme nsP1. Interacts with protease nsP2. Interacts with itself. Requires Mg(2+) as cofactor. Mn(2+) is required as a cofactor. Polyprotein P1234: Specific enzymatic cleavages in vivo yield mature proteins. The processing of the polyprotein is temporally regulated. In early stages (1.7 hpi), P1234 is first cleaved in trans through its nsP2 protease activity, releasing P123' and nsP4, which associate to form the early replication complex. At the same time, P1234 is also cut at the nsP1/nsP2 site early in infection but with lower efficiency. After replication of the viral minus-strand RNAs (4 hpi), the polyproteins are cut at the nsP1/nsP2 and nsP2/nsP3 sites very efficiently, preventing accumulation of P123' and P1234 and allowing the formation of the late replication complex. NsP3'/nsP4 site is not cleaved anymore and P34 is produced rather than nsP4. In terms of processing, specific enzymatic cleavages in vivo yield mature proteins. The processing of the polyprotein is temporally regulated. In early stages (1.7 hpi), P123 is cleaved at the nsP1/nsP2 site with low efficiency. After replication of the viral minus-strand RNAs (4 hpi), the polyproteins are cut at the nsP1/nsP2 and nsP2/nsP3 sites very efficiently, preventing accumulation of P123 and allowing the formation of the late replication complex. Post-translationally, phosphorylated by host on serines and threonines. Ubiquitinated; targets the protein for rapid degradation via the ubiquitin system. Nsp4 is present in extremely low quantities due to low frequency of translation through the amber stop-codon and the degradation by the ubiquitin pathway.

Its subcellular location is the host cytoplasmic vesicle membrane. It carries out the reaction RNA(n) + a ribonucleoside 5'-triphosphate = RNA(n+1) + diphosphate. The catalysed reaction is 4-O-(ADP-D-ribosyl)-L-aspartyl-[protein] + H2O = L-aspartyl-[protein] + ADP-D-ribose + H(+). The enzyme catalyses 5-O-(ADP-D-ribosyl)-L-glutamyl-[protein] + H2O = L-glutamyl-[protein] + ADP-D-ribose + H(+). It catalyses the reaction RNA(n) + ATP = RNA(n)-3'-adenine ribonucleotide + diphosphate. It carries out the reaction ADP-alpha-D-ribose 1''-phosphate + H2O = ADP-D-ribose + phosphate. Its function is as follows. Polyprotein P1234: Inactive precursor of the viral replicase, which is activated by cleavages carried out by the viral protease nsP2. The early replication complex formed by the polyprotein P123 and nsP4 synthesizes minus-strand RNAs. As soon P123 is cleaved into mature proteins, the plus-strand RNAs synthesis begins. Functionally, the early replication complex formed by the polyprotein P123' and nsP4 synthesizes minus-strand RNAs. Polyprotein P123' is a short-lived polyprotein that accumulates during early stage of infection. As soon P123' is cleaved into mature proteins, the plus-strand RNAs synthesis begins. In terms of biological role, seems to be essential for minus-strand RNAs and subgenomic 26S mRNAs synthesis. Displays mono-ADP-ribosylhydrolase activity. ADP-ribosylation is a post-translational modification that controls various processes of the host cell and the virus probably needs to revert it for optimal viral replication. Binds proteins of FXR family and sequesters them into the viral RNA replication complexes thereby inhibiting the formation of host stress granules on viral mRNAs. The nsp3'-FXR complexes bind viral RNAs and probably orchestrate the assembly of viral replication complexes, thanks to the ability of FXR family members to self-assemble and bind DNA. Its function is as follows. Seems to be essential for minus-strand RNAs and subgenomic 26S mRNAs synthesis. Displays mono-ADP-ribosylhydrolase activity. ADP-ribosylation is a post-translational modification that controls various processes of the host cell and the virus probably needs to revert it for optimal viral replication. Binds proteins of G3BP family and sequesters them into the viral RNA replication complexes thereby inhibiting the formation of host stress granules on viral mRNAs. The nsp3-G3BP complexes bind viral RNAs and probably orchestrate the assembly of viral replication complexes, thanks to the ability of G3BP family members to self-assemble and bind DNA. RNA dependent RNA polymerase. Replicates genomic and antigenomic RNA by recognizing replications specific signals. The early replication complex formed by the polyprotein P123 and nsP4 synthesizes minus-strand RNAs. The late replication complex composed of fully processed nsP1-nsP4 is responsible for the production of genomic and subgenomic plus-strand RNAs. This chain is Polyprotein nsP1234, found in Ross river virus (strain T48) (RRV).